Reading from the N-terminus, the 420-residue chain is MSDDQFHHPPPPSSMRHRSTSDAADGGCGEIVEVQGGHIVRSTGRKDRHSKVCTAKGPRDRRVRLSAHTAIQFYDVQDRLGFDRPSKAVDWLIKKAKTSIDELAELPPWNPADAIRLAAANAKPRRTTAKTQISPSPPPPQQQQQQQQLQFGVGFNGGGAEHPSNNESSFLPPSMDSDSIADTIKSFFPVIGSSTEAPSNHNLMHNYHHQHPPDLLSRTNSQNQDLRLSLQSFPDGPPSLLHHQHHHHTSASASEPTLFYGQSNPLGFDTSSWEQQSSEFGRIQRLVAWNSGGGGGATDTGNGGGFLFAPPTPSTTSFQPVLGQSQQLYSQRGPLQSSYSPMIRAWFDPHHHHQSISTDDLNHHHHLPPPVHQSAIPGIGFASGEFSSGFRIPARFQGQEEEQHDGLTHKPSSASSISRH.

Positions 1–27 (MSDDQFHHPPPPSSMRHRSTSDAADGG) are disordered. Positions 45-103 (RKDRHSKVCTAKGPRDRRVRLSAHTAIQFYDVQDRLGFDRPSKAVDWLIKKAKTSIDEL) constitute a TCP domain. Disordered regions lie at residues 121 to 176 (NAKP…PSMD), 228 to 256 (LSLQ…ASEP), 353 to 379 (HQSI…IPGI), and 399 to 420 (QEEE…ISRH). Polar residues predominate over residues 410-420 (KPSSASSISRH).

As to quaternary structure, interacts with AHL27 and AHL29. Interacts with SPL. Interacts with JGB. Interacts with GI (via N-terminus). In terms of tissue distribution, expressed in cotyledons, particularly in the vascular region, in leaves, roots, buds, flowers and immature siliques.

Its subcellular location is the nucleus. Its function is as follows. Transcription factor playing a pivotal role in the control of morphogenesis of shoot organs by negatively regulating the expression of boundary-specific genes such as CUC genes, probably through the induction of miRNA (e.g. miR164). Required during early steps of embryogenesis. Participates in ovule development. Activates LOX2 expression by binding to the 5'-GGACCA-3' motif found in its promoter. Activates YUC5 transcription by binding to the 5'-GTGGGCCA-3' motif found in its promoter. Through the activation of YUC5 transcription, integrates the auxin response to a brassinosteroid-dependent molecular circuit that promotes cell elongation in hypocotyls. Activates GIS transcription by binding to the 5'-TGGTCC-3' motif found in its promoter. Involved in the regulation of trichome branching through the activation of GIS transcription. Activates CO transcription by binding to the 5'-GGACCAC-3' motif found in its promoter. Involved in the regulation of photoperiodic flowering through the activation of CO transcription. Activates TCL1 and TCL2 transcription by binding to the 5'-TGGCCA-3' and 5'-GTGGACCA-3' motifS found in their respective promoters. Involved in the suppression of trichome initiaition through the activation of TCL1 and TCL2 transcription. Activates HAT2 transcription by binding to the 5'-TGGTCCAC-3' motif found in its promoter. Through the activation of HAT2 transcription, involved in the auxin-independent reprogramming of mitotic cells to exit division and acquire differentiation competence within the transition zone. The sequence is that of Transcription factor TCP4 (TCP4) from Arabidopsis thaliana (Mouse-ear cress).